Consider the following 62-residue polypeptide: uncharacterized protein (62 aa).

Positions 1–13 (MGESKSPQESSSE) are enriched in polar residues. Residues 1 to 62 (MGESKSPQES…SRREFRRKSG (62 aa)) form a disordered region. Over residues 14-28 (GETKRKFREALDRKM) the composition is skewed to basic and acidic residues.

This is an uncharacterized protein from Mycobacterium tuberculosis (strain ATCC 25618 / H37Rv).